We begin with the raw amino-acid sequence, 181 residues long: Caltractin ICL1a (181 aa).

Residues 1–29 form a disordered region; it reads MARRGQQPPPQQAPPAQKNQPGKFNPAEF. Positions 14–23 are enriched in low complexity; it reads PPAQKNQPGK. 4 consecutive EF-hand domains span residues 37-72, 73-108, 110-145, and 146-181; these read EEVLEIKEAFDLFDTDGTQSIDPKELKAAMTSLGFE, AKNQTIYQMISDLDTDGSGQIDFAEFLKLMTARISE, DSKADIQKVFNLFDSERAGVVTLKDLRKVAKELGET, and MDDSELQEMIDRADSDGDAQVTFEDFYNIMTKKTFA. The Ca(2+) site is built by D50, D52, T54, S56, E61, D86, D88, S90, Q92, and E97.

It belongs to the centrin family. In terms of assembly, monomer.

The protein resides in the cytoplasm. The protein localises to the cytoskeleton. Functionally, plays a fundamental role in microtubule organizing center structure and function. Component of the infraciliary lattice (ICL) and the ciliary basal bodies. The protein is Caltractin ICL1a (Icl1a) of Paramecium tetraurelia.